A 245-amino-acid chain; its full sequence is Ribosome maturation factor RimP (245 aa).

This sequence belongs to the RimP family.

Its subcellular location is the cytoplasm. Its function is as follows. Required for maturation of 30S ribosomal subunits. The polypeptide is Ribosome maturation factor RimP (Verminephrobacter eiseniae (strain EF01-2)).